A 404-amino-acid chain; its full sequence is Propionate kinase (404 aa).

Belongs to the acetokinase family. PduW subfamily.

It localises to the cytoplasm. The catalysed reaction is propanoate + ATP = propanoyl phosphate + ADP. The protein operates within polyol metabolism; 1,2-propanediol degradation. Its function is as follows. Works with phosphate acetyltransferase (pta) to capture exogenous propionate and regenerate propionyl-CoA during degradation of 1,2-propanediol (1,2-PD). This Citrobacter koseri (strain ATCC BAA-895 / CDC 4225-83 / SGSC4696) protein is Propionate kinase.